The following is a 94-amino-acid chain: Integration host factor subunit beta (94 aa).

This sequence belongs to the bacterial histone-like protein family. As to quaternary structure, heterodimer of an alpha and a beta chain.

Its function is as follows. This protein is one of the two subunits of integration host factor, a specific DNA-binding protein that functions in genetic recombination as well as in transcriptional and translational control. In Haemophilus influenzae (strain 86-028NP), this protein is Integration host factor subunit beta.